A 387-amino-acid chain; its full sequence is Ferrochelatase (387 aa).

His196 and Glu277 together coordinate Fe cation.

This sequence belongs to the ferrochelatase family.

It localises to the cytoplasm. It catalyses the reaction heme b + 2 H(+) = protoporphyrin IX + Fe(2+). It functions in the pathway porphyrin-containing compound metabolism; protoheme biosynthesis; protoheme from protoporphyrin-IX: step 1/1. Its function is as follows. Catalyzes the ferrous insertion into protoporphyrin IX. The sequence is that of Ferrochelatase from Synechococcus sp. (strain RCC307).